The sequence spans 388 residues: Succinyl-diaminopimelate desuccinylase (388 aa).

His-84 contacts Zn(2+). Residue Asp-86 is part of the active site. Asp-115 is a Zn(2+) binding site. Glu-146 (proton acceptor) is an active-site residue. Glu-147, Glu-175, and His-360 together coordinate Zn(2+).

The protein belongs to the peptidase M20A family. DapE subfamily. As to quaternary structure, homodimer. Zn(2+) is required as a cofactor. The cofactor is Co(2+).

The catalysed reaction is N-succinyl-(2S,6S)-2,6-diaminopimelate + H2O = (2S,6S)-2,6-diaminopimelate + succinate. The protein operates within amino-acid biosynthesis; L-lysine biosynthesis via DAP pathway; LL-2,6-diaminopimelate from (S)-tetrahydrodipicolinate (succinylase route): step 3/3. Catalyzes the hydrolysis of N-succinyl-L,L-diaminopimelic acid (SDAP), forming succinate and LL-2,6-diaminopimelate (DAP), an intermediate involved in the bacterial biosynthesis of lysine and meso-diaminopimelic acid, an essential component of bacterial cell walls. In Helicobacter pylori (strain G27), this protein is Succinyl-diaminopimelate desuccinylase.